Consider the following 348-residue polypeptide: MEENKQKALSAALSQIERQFGKGSVMRMGDSTVSRDIEAISTGSLGLDIALGIGGLPKGRIVEIYGPESSGKTTLTLQVIAECQKMGGTAAFIDAEHALDPSYAQKLGVKVDELLVSQPDTGEQALEITDMLVRSAAVDVVIIDSVAALTPKAEIEGEMGDSHVGLQARLMSQALRKLTANIKRSNTLVIFINQIRMKIGVMFGSPETTTGGNALKFYASVRLDIRRIGSIKKGEEILGSETRVKVVKNKVAPPFKMTEFDILYNEGISRESEIINLGVQLNLIEKSGAWYSYKQEKIGQGKENVRLYLKENPQVAAELEQQIRTELLEKKLSVLASSSEDLFETIDD.

Gly-66–Thr-73 serves as a coordination point for ATP.

Belongs to the RecA family.

It is found in the cytoplasm. Functionally, can catalyze the hydrolysis of ATP in the presence of single-stranded DNA, the ATP-dependent uptake of single-stranded DNA by duplex DNA, and the ATP-dependent hybridization of homologous single-stranded DNAs. It interacts with LexA causing its activation and leading to its autocatalytic cleavage. The protein is Protein RecA of Legionella pneumophila (strain Paris).